Reading from the N-terminus, the 90-residue chain is UPF0367 protein Npun_R4552 (90 aa).

It belongs to the UPF0367 family.

The polypeptide is UPF0367 protein Npun_R4552 (Nostoc punctiforme (strain ATCC 29133 / PCC 73102)).